The primary structure comprises 367 residues: Ferrochelatase (367 aa).

The Fe cation site is built by histidine 226 and glutamate 307.

The protein belongs to the ferrochelatase family.

It is found in the cytoplasm. The enzyme catalyses heme b + 2 H(+) = protoporphyrin IX + Fe(2+). Its pathway is porphyrin-containing compound metabolism; protoheme biosynthesis; protoheme from protoporphyrin-IX: step 1/1. In terms of biological role, catalyzes the ferrous insertion into protoporphyrin IX. This is Ferrochelatase from Burkholderia pseudomallei (strain 668).